Here is a 202-residue protein sequence, read N- to C-terminus: Superoxide dismutase [Mn] (202 aa).

The Mn(2+) site is built by H27, H82, D164, and H168.

Belongs to the iron/manganese superoxide dismutase family. Homodimer. Mn(2+) is required as a cofactor.

It carries out the reaction 2 superoxide + 2 H(+) = H2O2 + O2. Destroys superoxide anion radicals which are normally produced within the cells and which are toxic to biological systems. This chain is Superoxide dismutase [Mn] (sodA), found in Listeria innocua serovar 6a (strain ATCC BAA-680 / CLIP 11262).